The following is a 1175-amino-acid chain: Chromosome partition protein Smc (1175 aa).

32-39 contributes to the ATP binding site; sequence PNGCGKSN. A coiled-coil region spans residues 170–504; it reads VSKYKERRRE…ALKALQEKVK (335 aa). One can recognise an SMC hinge domain in the interval 524–625; it reads LWSRIAIEPG…YTAPTLEEAL (102 aa). 2 coiled-coil regions span residues 684–918 and 944–1022; these read DESR…FQLK and SQSI…ELLS. Residues 807-849 form a disordered region; that stretch reads RQAQEATFSRRSLEARRGELSRTIETASQQARSLADEQQRAQD. The span at 817–828 shows a compositional bias: basic and acidic residues; sequence RSLEARRGELSR. Polar residues predominate over residues 829-838; that stretch reads TIETASQQAR. The segment covering 840-849 has biased composition (basic and acidic residues); it reads LADEQQRAQD.

Belongs to the SMC family. In terms of assembly, homodimer.

It localises to the cytoplasm. In terms of biological role, required for chromosome condensation and partitioning. The polypeptide is Chromosome partition protein Smc (Delftia acidovorans (strain DSM 14801 / SPH-1)).